The sequence spans 66 residues: uncharacterized protein (66 aa).

This is an uncharacterized protein from Frog virus 3 (isolate Goorha) (FV-3).